The sequence spans 97 residues: Large ribosomal subunit protein eL30 (97 aa).

It belongs to the eukaryotic ribosomal protein eL30 family.

The sequence is that of Large ribosomal subunit protein eL30 from Methanoregula boonei (strain DSM 21154 / JCM 14090 / 6A8).